The following is a 467-amino-acid chain: MIHTQMEDAQYEIRHQVLNPNQRQQLEDRRRIKEQLHQLEQDNESPTHMYRRKLKIASDVNLLDQHDSFYHTTKSLLVLFQIMGVMPIMRSPKGVDMPRTTFTWCSKAFLWAYFIYACETVIVLVVARERINKFISTSDKRFDEVIYNIIFMSIMVPHFLLPVASWRNGSEVAKFKNMWTDFQYKYLIVTGKPIVFPKLYPITWTLCIVSWSLSLVIILSQYYLQPDFQFCHTFAYYHIIAMLNGFCSLWFVNCTAFGTASKAFAKELTDVLATERPAAKLTEYRHLWVDLSHMMQQLGKAYSNMYGIYCLVIFFTTIIATYGSLSEIIEHGATYKEVGLFVIVFYCMSLLFIICNEAHHASKRVGLNFQERLLNVNLTAVDKATQKEVEMFLVAIDKNPPTMNLDGYANINRGLITSNISFMATYLVVLMQFKLTLLRQSAKNAFISALKANLSRIRSLDADKVNT.

The Cytoplasmic portion of the chain corresponds to 1-106 (MIHTQMEDAQ…MPRTTFTWCS (106 aa)). The helical transmembrane segment at 107-127 (KAFLWAYFIYACETVIVLVVA) threads the bilayer. Over 128–144 (RERINKFISTSDKRFDE) the chain is Extracellular. The chain crosses the membrane as a helical span at residues 145-165 (VIYNIIFMSIMVPHFLLPVAS). Topologically, residues 166–198 (WRNGSEVAKFKNMWTDFQYKYLIVTGKPIVFPK) are cytoplasmic. Residues 199–219 (LYPITWTLCIVSWSLSLVIIL) traverse the membrane as a helical segment. Residues 220–238 (SQYYLQPDFQFCHTFAYYH) are Extracellular-facing. The chain crosses the membrane as a helical span at residues 239 to 259 (IIAMLNGFCSLWFVNCTAFGT). Residues 260 to 304 (ASKAFAKELTDVLATERPAAKLTEYRHLWVDLSHMMQQLGKAYSN) lie on the Cytoplasmic side of the membrane. Residues 305-325 (MYGIYCLVIFFTTIIATYGSL) traverse the membrane as a helical segment. The Extracellular portion of the chain corresponds to 326 to 337 (SEIIEHGATYKE). The chain crosses the membrane as a helical span at residues 338-358 (VGLFVIVFYCMSLLFIICNEA). Topologically, residues 359 to 414 (HHASKRVGLNFQERLLNVNLTAVDKATQKEVEMFLVAIDKNPPTMNLDGYANINRG) are cytoplasmic. The helical transmembrane segment at 415–435 (LITSNISFMATYLVVLMQFKL) threads the bilayer. At 436 to 467 (TLLRQSAKNAFISALKANLSRIRSLDADKVNT) the chain is on the extracellular side. N-linked (GlcNAc...) asparagine glycosylation occurs at N453.

Belongs to the insect chemoreceptor superfamily. Gustatory receptor (GR) family. Gr21a subfamily. In terms of tissue distribution, carbon dioxide-responsive neurons coexpress GPRgr22 and GPRgr24 in the maxillary palp at both larval and adult life stages.

It is found in the cell membrane. Gustatory receptor which mediates acceptance or avoidance behavior, depending on its substrates. GPRgr22 and GPRgr24 together are sufficient for olfactory carbon dioxide-chemosensation. The chain is Gustatory and odorant receptor 22 from Anopheles gambiae (African malaria mosquito).